Here is a 1384-residue protein sequence, read N- to C-terminus: Hepatocyte growth factor receptor (1384 aa).

The N-terminal stretch at 1 to 24 is a signal peptide; the sequence is MKAPAVLAPGILVLLFTFVQKSNG. Residues 25–933 lie on the Extracellular side of the membrane; it reads ECKEALVKSR…VIVQPDQNFT (909 aa). Residues 27-516 form the Sema domain; that stretch reads KEALVKSRMN…TGKKITKIPL (490 aa). N-linked (GlcNAc...) asparagine glycosylation is present at N45. Disulfide bonds link C95/C101, C98/C160, C133/C141, and C173/C176. The N-linked (GlcNAc...) asparagine glycan is linked to N106. Residue N149 is glycosylated (N-linked (GlcNAc...) asparagine). N203 and N359 each carry an N-linked (GlcNAc...) asparagine glycan. Disulfide bonds link C299–C364 and C386–C398. 2 N-linked (GlcNAc...) asparagine glycosylation sites follow: N400 and N406. 4 disulfides stabilise this stretch: C521–C539, C527–C562, C530–C546, and C542–C552. 3 consecutive IPT/TIG domains span residues 564-656, 658-740, and 743-837; these read PTIY…FSYV, PIIT…FIYR, and PIVY…LIYV. O-linked (Man) threonine glycosylation occurs at T583. Residues N608 and N636 are each glycosylated (N-linked (GlcNAc...) asparagine). 2 O-linked (Man) threonine glycosylation sites follow: T677 and T762. N-linked (GlcNAc...) asparagine glycosylation is found at N786, N880, and N931. The helical transmembrane segment at 934-956 threads the bilayer; it reads GLIVGVVSVSIILLLLLGLFLWL. Topologically, residues 957–1384 are cytoplasmic; sequence KKRKQIKDLG…NVSGEDDDDT (428 aa). Phosphoserine is present on S967. At T978 the chain carries Phosphothreonine. S991, S998, and S1001 each carry phosphoserine. At Y1004 the chain carries Phosphotyrosine. The 268-residue stretch at 1079–1346 folds into the Protein kinase domain; that stretch reads VHFNEVIGRG…RIAAIFSAFI (268 aa). ATP is bound by residues 1085-1093 and K1111; that span reads IGRGHFGCV. The active-site Proton acceptor is the D1205. The interval 1213 to 1382 is interaction with RANBP9; the sequence is LDEKFTVKVA…QENVSGEDDD (170 aa). Phosphotyrosine is present on Y1231. Y1235 and Y1236 each carry phosphotyrosine; by autocatalysis. T1290 bears the Phosphothreonine mark. Positions 1321–1360 are interaction with MUC20; that stretch reads WHPKAELRPSFSELVSRIAAIFSAFIGEHYVHVNATYVNV. Phosphotyrosine; by autocatalysis occurs at positions 1350 and 1357. A Phosphotyrosine modification is found at Y1366.

The protein belongs to the protein kinase superfamily. Tyr protein kinase family. Heterodimer made of an alpha chain (50 kDa) and a beta chain (145 kDa) which are disulfide linked. Binds PLXNB1. Interacts when phosphorylated with downstream effectors including STAT3, PIK3R1, SRC, PCLG1, GRB2 and GAB1. Interacts with SPSB1, SPSB2 and SPSB4. Interacts with INPP5D/SHIP1. When phosphorylated at Tyr-1357, interacts with INPPL1/SHIP2. Interacts with RANBP9 and RANBP10, as well as SPSB1, SPSB2, SPSB3 and SPSB4. SPSB1 binding occurs in the presence and in the absence of HGF, however HGF treatment has a positive effect on this interaction. Interacts with MUC20; prevents interaction with GRB2 and suppresses hepatocyte growth factor-induced cell proliferation. Interacts with GRB10. Interacts with PTPN1 and PTPN2. Interacts with HSP90AA1 and HSP90AB1; the interaction suppresses MET kinase activity. Interacts with tensin TNS3. Interacts (when phosphorylated) with tensin TNS4 (via SH2 domain); the interaction increases MET protein stability by inhibiting MET endocytosis and subsequent lysosomal degradation. Post-translationally, autophosphorylated in response to ligand binding on Tyr-1235 and Tyr-1236 in the kinase domain leading to further phosphorylation of Tyr-1350 and Tyr-1357 in the C-terminal multifunctional docking site. Dephosphorylated by PTPRJ at Tyr-1350 and Tyr-1366. Dephosphorylated by PTPN1 and PTPN2. Ubiquitinated. Ubiquitination by CBL regulates the receptor stability and activity through proteasomal degradation. In terms of processing, O-mannosylation of IPT/TIG domains by TMEM260 is required for protein maturation. O-mannosylated residues are composed of single mannose glycans that are not elongated or modified.

Its subcellular location is the membrane. The enzyme catalyses L-tyrosyl-[protein] + ATP = O-phospho-L-tyrosyl-[protein] + ADP + H(+). In its inactive state, the C-terminal tail interacts with the catalytic domain and inhibits the kinase activity. Upon ligand binding, the C-terminal tail is displaced and becomes phosphorylated, thus increasing the kinase activity. Its function is as follows. Receptor tyrosine kinase that transduces signals from the extracellular matrix into the cytoplasm by binding to hepatocyte growth factor/HGF ligand. Regulates many physiological processes including proliferation, scattering, morphogenesis and survival. Ligand binding at the cell surface induces autophosphorylation of MET on its intracellular domain that provides docking sites for downstream signaling molecules. Following activation by ligand, interacts with the PI3-kinase subunit PIK3R1, PLCG1, SRC, GRB2, STAT3 or the adapter GAB1. Recruitment of these downstream effectors by MET leads to the activation of several signaling cascades including the RAS-ERK, PI3 kinase-AKT, or PLCgamma-PKC. The RAS-ERK activation is associated with the morphogenetic effects while PI3K/AKT coordinates prosurvival effects. During embryonic development, MET signaling plays a role in gastrulation, development and migration of muscles and neuronal precursors, angiogenesis and kidney formation. In adults, participates in wound healing as well as organ regeneration and tissue remodeling. Also promotes differentiation and proliferation of hematopoietic cells. The chain is Hepatocyte growth factor receptor (MET) from Ovis aries (Sheep).